The chain runs to 393 residues: Elongation factor Tu (393 aa).

The region spanning 10–203 (KPHVNIGTIG…AVDDYIPEPV (194 aa)) is the tr-type G domain. Positions 19–26 (GHVDHGKT) are G1. GTP is bound at residue 19 to 26 (GHVDHGKT). T26 is a Mg(2+) binding site. Positions 60-64 (GITIS) are G2. The segment at 81-84 (DCPG) is G3. Residues 81–85 (DCPGH) and 136–139 (NKVD) contribute to the GTP site. The segment at 136-139 (NKVD) is G4. The segment at 173–175 (SAL) is G5.

The protein belongs to the TRAFAC class translation factor GTPase superfamily. Classic translation factor GTPase family. EF-Tu/EF-1A subfamily. Monomer.

Its subcellular location is the cytoplasm. The catalysed reaction is GTP + H2O = GDP + phosphate + H(+). In terms of biological role, GTP hydrolase that promotes the GTP-dependent binding of aminoacyl-tRNA to the A-site of ribosomes during protein biosynthesis. This is Elongation factor Tu from Chlorobaculum parvum (strain DSM 263 / NCIMB 8327) (Chlorobium vibrioforme subsp. thiosulfatophilum).